The primary structure comprises 205 residues: MLSTEFETPLWENLSRVCGIDEAGRGPLAGPVVAAAVAFPRHFKPTGILEKLDDSKKLTAELREELAPAIRESAEAWAVAVVDAEIIDRINILQATMLAMNQAVESLAATPELLLVDGNRFRPVLPIPYQTIVKGDSKVFSIAAASVLAKTRRDELMVAYAAEYPAYGFDLHFGYPTARHVEAIARHGRCAIHRKSFKLRKLGEK.

Residues 15–205 (SRVCGIDEAG…SFKLRKLGEK (191 aa)) form the RNase H type-2 domain. D21, E22, and D117 together coordinate a divalent metal cation.

Belongs to the RNase HII family. It depends on Mn(2+) as a cofactor. Requires Mg(2+) as cofactor.

The protein localises to the cytoplasm. The enzyme catalyses Endonucleolytic cleavage to 5'-phosphomonoester.. Functionally, endonuclease that specifically degrades the RNA of RNA-DNA hybrids. This is Ribonuclease HII from Chlorobaculum parvum (strain DSM 263 / NCIMB 8327) (Chlorobium vibrioforme subsp. thiosulfatophilum).